The primary structure comprises 190 residues: Crossover junction endodeoxyribonuclease RuvC (190 aa).

Active-site residues include aspartate 8, glutamate 67, and aspartate 139. Residues aspartate 8, glutamate 67, and aspartate 139 each contribute to the Mg(2+) site.

Belongs to the RuvC family. In terms of assembly, homodimer which binds Holliday junction (HJ) DNA. The HJ becomes 2-fold symmetrical on binding to RuvC with unstacked arms; it has a different conformation from HJ DNA in complex with RuvA. In the full resolvosome a probable DNA-RuvA(4)-RuvB(12)-RuvC(2) complex forms which resolves the HJ. Mg(2+) serves as cofactor.

Its subcellular location is the cytoplasm. It catalyses the reaction Endonucleolytic cleavage at a junction such as a reciprocal single-stranded crossover between two homologous DNA duplexes (Holliday junction).. Its function is as follows. The RuvA-RuvB-RuvC complex processes Holliday junction (HJ) DNA during genetic recombination and DNA repair. Endonuclease that resolves HJ intermediates. Cleaves cruciform DNA by making single-stranded nicks across the HJ at symmetrical positions within the homologous arms, yielding a 5'-phosphate and a 3'-hydroxyl group; requires a central core of homology in the junction. The consensus cleavage sequence is 5'-(A/T)TT(C/G)-3'. Cleavage occurs on the 3'-side of the TT dinucleotide at the point of strand exchange. HJ branch migration catalyzed by RuvA-RuvB allows RuvC to scan DNA until it finds its consensus sequence, where it cleaves and resolves the cruciform DNA. The sequence is that of Crossover junction endodeoxyribonuclease RuvC from Actinobacillus succinogenes (strain ATCC 55618 / DSM 22257 / CCUG 43843 / 130Z).